Consider the following 85-residue polypeptide: ATP synthase subunit 9, mitochondrial (85 aa).

2 helical membrane passes run 19–39 and 61–81; these read IGAG…GNVF and ILGF…AFLI.

This sequence belongs to the ATPase C chain family. F-type ATPases have 2 components, CF(1) - the catalytic core - and CF(0) - the membrane proton channel. CF(1) has five subunits: alpha(3), beta(3), gamma(1), delta(1), epsilon(1). CF(0) has three main subunits: a, b and c.

The protein resides in the mitochondrion membrane. Functionally, this protein is one of the chains of the nonenzymatic membrane component (F0) of mitochondrial ATPase. The protein is ATP synthase subunit 9, mitochondrial (ATP9) of Arabidopsis thaliana (Mouse-ear cress).